The following is a 163-amino-acid chain: Nucleotide-binding protein YajQ (163 aa).

The protein belongs to the YajQ family.

Its function is as follows. Nucleotide-binding protein. The protein is Nucleotide-binding protein YajQ of Salmonella paratyphi A (strain ATCC 9150 / SARB42).